We begin with the raw amino-acid sequence, 349 residues long: Aldehyde reductase YahK (349 aa).

Zn(2+)-binding residues include Cys-40, His-62, Cys-93, Cys-96, Cys-99, Cys-107, and Cys-158.

Belongs to the zinc-containing alcohol dehydrogenase family. Zn(2+) serves as cofactor.

It catalyses the reaction a primary alcohol + NADP(+) = an aldehyde + NADPH + H(+). Catalyzes the reduction of a wide range of aldehydes into their corresponding alcohols. Has a strong preference for NADPH over NADH as the electron donor. Cannot use a ketone as substrate. Is a major source of NADPH-dependent aldehyde reductase activity in E.coli. The in vivo functions of YahK has yet to be determined. This Escherichia coli (strain K12) protein is Aldehyde reductase YahK (yahK).